Here is a 234-residue protein sequence, read N- to C-terminus: Sugar fermentation stimulation protein homolog (234 aa).

Belongs to the SfsA family.

The polypeptide is Sugar fermentation stimulation protein homolog (Shewanella baltica (strain OS155 / ATCC BAA-1091)).